Consider the following 757-residue polypeptide: RNA cytosine C(5)-methyltransferase NSUN2 (757 aa).

Residues 1-35 (MGRRARGRRFQQPPQPEGEEDASDGGRKRGQAGWE) form a disordered region. Phosphoserine is present on serine 23. Residue lysine 46 forms a Glycyl lysine isopeptide (Lys-Gly) (interchain with G-Cter in SUMO2) linkage. Serine 139 carries the post-translational modification Phosphoserine; by AURKB. S-adenosyl-L-methionine-binding positions include 184–190 (CAAPGSK), aspartate 215, aspartate 242, and aspartate 268. The active-site Nucleophile is the cysteine 321. Positions 436–504 (NKRQPKVQNK…EKKDGVCGPP (69 aa)) are disordered. Serine 456 and serine 473 each carry phosphoserine. Positions 463 to 476 (GNPSDQSELESQMI) are enriched in polar residues. Residues lysine 510 and lysine 515 each participate in a glycyl lysine isopeptide (Lys-Gly) (interchain with G-Cter in SUMO2) cross-link. Lysine 585 bears the N6-acetyllysine; alternate mark. Position 585 is an N6-malonyllysine; alternate (lysine 585). A Glycyl lysine isopeptide (Lys-Gly) (interchain with G-Cter in SUMO2); alternate cross-link involves residue lysine 585. Serine 592 carries the post-translational modification Phosphoserine. Residues lysine 639, lysine 653, and lysine 659 each participate in a glycyl lysine isopeptide (Lys-Gly) (interchain with G-Cter in SUMO2) cross-link. Positions 716-757 (LTNENAASPEQPGDEDAKQTAQDPCVPDSVPGCDAAAAEPSR) are disordered. The residue at position 717 (threonine 717) is a Phosphothreonine. At serine 723 the chain carries Phosphoserine.

The protein belongs to the class I-like SAM-binding methyltransferase superfamily. RsmB/NOP family. TRM4 subfamily. Interacts with NPM1 and NCL during interphase; interaction is disrupted following phosphorylation at Ser-139. In terms of processing, phosphorylated at Ser-139 by AURKB during mitosis, leading to abolish methyltransferase activity and the interaction with NPM1. In terms of tissue distribution, ubiquitously expressed at low level. Up-regulated in tumors. Dynamically expressed during morphogenesis and in adult skin: in adult skin, expression is up-regulated in the bulge and hair germ as soon as the hair follicle enters its growing phase (anagen). During anagen, expressed at highest level in cells of the hair germ that give rise to the hair matrix.

Its subcellular location is the nucleus. It is found in the nucleolus. It localises to the cytoplasm. The protein localises to the mitochondrion. The protein resides in the cytoskeleton. Its subcellular location is the spindle. It is found in the secreted. It localises to the extracellular exosome. The catalysed reaction is cytidine(48) in tRNA + S-adenosyl-L-methionine = 5-methylcytidine(48) in tRNA + S-adenosyl-L-homocysteine + H(+). The enzyme catalyses cytidine(49) in tRNA + S-adenosyl-L-methionine = 5-methylcytidine(49) in tRNA + S-adenosyl-L-homocysteine + H(+). It catalyses the reaction cytidine(50) in tRNA + S-adenosyl-L-methionine = 5-methylcytidine(50) in tRNA + S-adenosyl-L-homocysteine + H(+). It carries out the reaction cytidine(34) in tRNA precursor + S-adenosyl-L-methionine = 5-methylcytidine(34) in tRNA precursor + S-adenosyl-L-homocysteine + H(+). The catalysed reaction is a cytidine in mRNA + S-adenosyl-L-methionine = a 5-methylcytidine in mRNA + S-adenosyl-L-homocysteine + H(+). Its activity is regulated as follows. Inhibited by magnesium ions. RNA cytosine C(5)-methyltransferase that methylates cytosine to 5-methylcytosine (m5C) in various RNAs, such as tRNAs, mRNAs and some long non-coding RNAs (lncRNAs). Involved in various processes, such as epidermal stem cell differentiation, testis differentiation and maternal to zygotic transition during early development: acts by increasing protein synthesis; cytosine C(5)-methylation promoting tRNA stability and preventing mRNA decay. Methylates cytosine to 5-methylcytosine (m5C) at positions 34 and 48 of intron-containing tRNA(Leu)(CAA) precursors, and at positions 48, 49 and 50 of tRNA(Gly)(GCC) precursors. tRNA methylation is required generation of RNA fragments derived from tRNAs (tRFs). Also mediates C(5)-methylation of mitochondrial tRNAs. Catalyzes cytosine C(5)-methylation of mRNAs, leading to stabilize them and prevent mRNA decay: mRNA stabilization involves YBX1 that specifically recognizes and binds m5C-modified transcripts. Cytosine C(5)-methylation of mRNAs also regulates mRNA export: methylated transcripts are specifically recognized by THOC4/ALYREF, which mediates mRNA nucleo-cytoplasmic shuttling. Also mediates cytosine C(5)-methylation of non-coding RNAs, such as vault RNAs (vtRNAs), promoting their processing into regulatory small RNAs. Cytosine C(5)-methylation of vtRNA VTRNA1.1 promotes its processing into small-vault RNA4 (svRNA4) and regulates epidermal differentiation. May act downstream of Myc to regulate epidermal cell growth and proliferation. Required for proper spindle assembly and chromosome segregation, independently of its methyltransferase activity. The protein is RNA cytosine C(5)-methyltransferase NSUN2 of Mus musculus (Mouse).